A 334-amino-acid polypeptide reads, in one-letter code: Ornithine carbamoyltransferase (334 aa).

Carbamoyl phosphate-binding positions include 56–59 (STRT), glutamine 83, arginine 107, and 134–137 (HPTQ). L-ornithine is bound by residues asparagine 168, aspartate 232, and 236-237 (SM). Residues 274–275 (CL) and arginine 320 each bind carbamoyl phosphate.

The protein belongs to the aspartate/ornithine carbamoyltransferase superfamily. OTCase family.

The protein localises to the cytoplasm. It carries out the reaction carbamoyl phosphate + L-ornithine = L-citrulline + phosphate + H(+). Its pathway is amino-acid biosynthesis; L-arginine biosynthesis; L-arginine from L-ornithine and carbamoyl phosphate: step 1/3. Its function is as follows. Reversibly catalyzes the transfer of the carbamoyl group from carbamoyl phosphate (CP) to the N(epsilon) atom of ornithine (ORN) to produce L-citrulline. In Shigella sonnei (strain Ss046), this protein is Ornithine carbamoyltransferase.